The chain runs to 434 residues: tRNA modification GTPase MnmE (434 aa).

(6S)-5-formyl-5,6,7,8-tetrahydrofolate is bound by residues R20, E79, and V119. The TrmE-type G domain occupies 219 to 361 (GLRVVLAGRP…LQEKLVEIGK (143 aa)). GTP-binding positions include 229–234 (NAGKST), 248–254 (APIAGTT), and 273–276 (DTAG). 2 residues coordinate Mg(2+): S233 and T254. Residue K434 coordinates (6S)-5-formyl-5,6,7,8-tetrahydrofolate.

The protein belongs to the TRAFAC class TrmE-Era-EngA-EngB-Septin-like GTPase superfamily. TrmE GTPase family. Homodimer. Heterotetramer of two MnmE and two MnmG subunits. K(+) is required as a cofactor.

It localises to the cytoplasm. Exhibits a very high intrinsic GTPase hydrolysis rate. Involved in the addition of a carboxymethylaminomethyl (cmnm) group at the wobble position (U34) of certain tRNAs, forming tRNA-cmnm(5)s(2)U34. The polypeptide is tRNA modification GTPase MnmE (Zymomonas mobilis subsp. mobilis (strain ATCC 31821 / ZM4 / CP4)).